The following is a 175-amino-acid chain: Gamma-crystallin M1 (175 aa).

Beta/gamma crystallin 'Greek key' domains are found at residues 2 to 40 (GKII…RVES), 41 to 86 (GCFM…RYPY), 89 to 121 (FRMR…RMSD), and 130 to 172 (GHWL…RRIT).

It belongs to the beta/gamma-crystallin family. As to quaternary structure, monomer.

Crystallins are the dominant structural components of the vertebrate eye lens. The protein is Gamma-crystallin M1 (GM1) of Chiloscyllium indicum (Slender bamboo shark).